The sequence spans 371 residues: Serpentine receptor class delta-1 (371 aa).

7 helical membrane passes run 31 to 51 (LSEVICGFGIVLNLLLIYVIF), 62 to 82 (AVLLFNFAIFDLLTCVASLLA), 109 to 129 (CFFCHCFVCHAMAHSQWILLI), 148 to 168 (MIVIVSLFYAMSAVIFLFYFW), 209 to 229 (IPSLIAIFYMTMPCVPIYFII), 267 to 287 (AIPIFWLVASGIFTLAEFGII), and 295 to 315 (ITFRLMDCIPSSSPLVAFIFI). The disordered stretch occupies residues 344–371 (EKFNQPPKQPTNPAQQSANNDAAKTEKV). Residues 354–365 (TNPAQQSANNDA) are compositionally biased toward polar residues.

It belongs to the nematode receptor-like protein srd family.

The protein localises to the membrane. In Caenorhabditis elegans, this protein is Serpentine receptor class delta-1 (srd-1).